The following is a 339-amino-acid chain: NADP-dependent dehydrogenase M3 (339 aa).

Residues Ser-49, Ile-51, Asp-93, Tyr-206, Lys-210, Ile-240, and Gln-244 each coordinate NADP(+). Tyr-206 (proton acceptor) is an active-site residue. The Lowers pKa of active site Tyr role is filled by Lys-210.

Belongs to the short-chain dehydrogenases/reductases (SDR) family. In terms of assembly, homodimer.

It localises to the cytoplasm. It is found in the cytosol. Its pathway is secondary metabolite biosynthesis. Its function is as follows. NADP-dependent dehydrogenase; part of the gene cluster that mediates the biosynthesis of squalestatin S1 (SQS1, also known as zaragozic acid A), a heavily oxidized fungal polyketide that offers potent cholesterol lowering activity by targeting squalene synthase (SS). SQS1 is composed of a 2,8-dioxobicyclic[3.2.1]octane-3,4,5-tricarboxyclic acid core that is connected to two lipophilic polyketide arms. These initial steps feature the priming of an unusual benzoic acid starter unit onto the highly reducing polyketide synthase pks2, followed by oxaloacetate extension and product release to generate a tricarboxylic acid containing product. The phenylalanine ammonia lyase (PAL) M7 and the acyl-CoA ligase M9 are involved in transforming phenylalanine into benzoyl-CoA. The citrate synthase-like protein R3 is involved in connecting the C-alpha-carbons of the hexaketide chain and oxaloacetate to afford the tricarboxylic acid unit. The potential hydrolytic enzymes, M8 and M10, are in close proximity to pks2 and may participate in product release. On the other side, the tetraketide arm is synthesized by a the squalestatin tetraketide synthase pks1 and enzymatically esterified to the core in the last biosynthetic step, by the acetyltransferase M4. The biosynthesis of the tetraketide must involve 3 rounds of chain extension. After the first and second rounds methyl-transfer occurs, and in all rounds of extension the ketoreductase and dehydratase are active. The enoyl reductase and C-MeT of pks1 are not active in the final round of extension. The acetyltransferase M4 appears to have a broad substrate selectivity for its acyl CoA substrate, allowing the in vitro synthesis of novel squalestatins. The biosynthesis of SQS1 requires several oxidative steps likely performed by oxidoreductases M1, R1 and R2. Finally, in support of the identification of the cluster as being responsible for SQS1 production, the cluster contains a gene encoding a putative squalene synthase (SS) R6, suggesting a likely mechanism for self-resistance. The protein is NADP-dependent dehydrogenase M3 of Phoma sp. (strain ATCC 20986 / MF5453).